A 291-amino-acid chain; its full sequence is Lipoyl synthase (291 aa).

Residues cysteine 43, cysteine 48, cysteine 54, cysteine 69, cysteine 73, cysteine 76, and serine 280 each contribute to the [4Fe-4S] cluster site. One can recognise a Radical SAM core domain in the interval 55-269 (FSSRTATFLI…AAYGRARGIP (215 aa)).

The protein belongs to the radical SAM superfamily. Lipoyl synthase family. The cofactor is [4Fe-4S] cluster.

Its subcellular location is the cytoplasm. The enzyme catalyses [[Fe-S] cluster scaffold protein carrying a second [4Fe-4S](2+) cluster] + N(6)-octanoyl-L-lysyl-[protein] + 2 oxidized [2Fe-2S]-[ferredoxin] + 2 S-adenosyl-L-methionine + 4 H(+) = [[Fe-S] cluster scaffold protein] + N(6)-[(R)-dihydrolipoyl]-L-lysyl-[protein] + 4 Fe(3+) + 2 hydrogen sulfide + 2 5'-deoxyadenosine + 2 L-methionine + 2 reduced [2Fe-2S]-[ferredoxin]. It functions in the pathway protein modification; protein lipoylation via endogenous pathway; protein N(6)-(lipoyl)lysine from octanoyl-[acyl-carrier-protein]: step 2/2. Its function is as follows. Catalyzes the radical-mediated insertion of two sulfur atoms into the C-6 and C-8 positions of the octanoyl moiety bound to the lipoyl domains of lipoate-dependent enzymes, thereby converting the octanoylated domains into lipoylated derivatives. The protein is Lipoyl synthase of Oleidesulfovibrio alaskensis (strain ATCC BAA-1058 / DSM 17464 / G20) (Desulfovibrio alaskensis).